Reading from the N-terminus, the 317-residue chain is Glutaminase (317 aa).

Substrate contacts are provided by serine 67, asparagine 118, glutamate 162, asparagine 169, tyrosine 193, tyrosine 245, and valine 263.

This sequence belongs to the glutaminase family. In terms of assembly, homotetramer.

It carries out the reaction L-glutamine + H2O = L-glutamate + NH4(+). The protein is Glutaminase of Brucella canis (strain ATCC 23365 / NCTC 10854 / RM-666).